The chain runs to 599 residues: Endoribonuclease ZC3H12A (599 aa).

The disordered stretch occupies residues 1–40 (MSGPCGEKPVLEASPTMSLWEFEDSHSRQGTPRPGQELAA). Positions 42–87 (EASALELQMKVDFFRKLGYSSTEIHSVLQKLGVQADTNTVLGELVK) are ubiquitin association domain. The tract at residues 81 to 150 (VLGELVKHGT…DGSNVAMSHG (70 aa)) is necessary for interaction with TANK. Residues 90 to 133 (TATERERQTSPDPCPQLPLVPRGGGTPKAPNLEPPLPEEEKEGS) form a disordered region. Position 99 is a phosphoserine (Ser-99). The RNase stretch occupies residues 112–297 (GGGTPKAPNL…LDNFLRKKPL (186 aa)). An RNase NYN domain is found at 135–290 (LRPVVIDGSN…LGRHGPSLDN (156 aa)). Residues 214 to 220 (RRVGGKR) form an RNA binding region. Asp-226 contributes to the Mg(2+) binding site. The C3H1-type zinc finger occupies 301-324 (HRKQPCPYGRKCTYGIKCRFFHPE). The necessary for interaction with ZC3H12D stretch occupies residues 301-457 (HRKQPCPYGR…SELWGVRGGG (157 aa)). Positions 343 to 420 (LSPPRAPSKD…SGSSFGPTDW (78 aa)) are disordered. A Phosphoserine modification is found at Ser-344. Over residues 358 to 375 (PSPSSQSSSLLTESEQCS) the composition is skewed to low complexity. Polar residues predominate over residues 386-399 (SPGSRQEGLTQTYA). Phosphoserine is present on residues Ser-438 and Ser-442. The disordered stretch occupies residues 522–546 (PPPTSVLQEPPVQSPGAGRSPWGRA).

This sequence belongs to the ZC3H12 family. In terms of assembly, oligomer. Found in a deubiquitination complex with TANK, USP10 and ZC3H12A; this complex inhibits genotoxic stress- or interleukin-1-beta-mediated NF-kappaB activation by promoting IKBKG or TRAF6 deubiquitination. Interacts with IKBKG; this interaction increases in response to DNA damage. Interacts with TANK; this interaction increases in response to DNA damage and serves as a bridge to anchor both TANK and USP10 into a deubiquitinating complex. Interacts with TRAF6; this interaction increases in response to DNA damage and is stimulated by TANK. Interacts with USP10; this interaction increases in response to DNA damage and serves as a bridge to anchor both TANK and USP10 into a deubiquitinating complex. Interacts with ZC3H12D. Interacts with TNRC6A. Interacts with IKBKB/IKKB. Interacts with IKBKB/IKKB. Interacts with BTRC; the interaction occurs when ZC3H12A is phosphorylated in a IKBKB/IKKB-dependent manner. Interacts with IRAK1; this interaction increases the interaction between ZC3H12A and IKBKB/IKKB. Interacts with UPF1; this interaction occurs in a mRNA translationally active- and termination-dependent manner and is essential for ZC3H12A-mediated degradation of target mRNAs. Associates with ribosomes. Interacts with ubiquitin. As to quaternary structure, (Microbial infection) Oligomerization is necessary for antiviral activity. The cofactor is Mg(2+). In terms of processing, phosphorylated by IRAK1; phosphorylation is necessary for subsequent phosphorylation by the I-kappa-B-kinase (IKK) complex. Phosphorylated by I-kappa-B-kinase (IKK) subunits IKBKB/IKKB and CHUK/IKKA at Ser-438 and Ser-442; these phosphorylations promote ubiquitin proteasome-mediated degradation of ZC3H12A and hence facilitates rapid and robust production of IL-6 mRNA in response to toll-like receptor (TLR) or IL-1 receptor stimuli. (Microbial infection) Rapidly degraded in activated T-cells in response to phorbol 13-acetate 12-myristate (PMA) during HIV-1 viral infection. Post-translationally, ubiquitinated; ubiquitination is induced in response to interleukin IL1 receptor stimuli in a IKBKB/IKKB and IRAK1-dependent manner, leading to proteasome-mediated degradation. In terms of processing, proteolytically cleaved between Arg-111 and Arg-214 by MALT1 in activated T-cells; cleavage at Arg-111 is critical for promoting ZC3H12A degradation in response to T-cell receptor (TCR) stimulation, and hence is necessary for prolonging the stability of a set of mRNAs controlling T-cell activation and Th17 cell differentiation. Expressed in heart, placenta, spleen, kidney, liver and lung. Expressed in leukocytes. Expressed in monocyte.

The protein localises to the nucleus. It is found in the cytoplasm. It localises to the P-body. The protein resides in the rough endoplasmic reticulum membrane. Its subcellular location is the cytoplasmic granule. Its function is as follows. Endoribonuclease involved in various biological functions such as cellular inflammatory response and immune homeostasis, glial differentiation of neuroprogenitor cells, cell death of cardiomyocytes, adipogenesis and angiogenesis. Functions as an endoribonuclease involved in mRNA decay. Modulates the inflammatory response by promoting the degradation of a set of translationally active cytokine-induced inflammation-related mRNAs, such as IL6 and IL12B, during the early phase of inflammation. Prevents aberrant T-cell-mediated immune reaction by degradation of multiple mRNAs controlling T-cell activation, such as those encoding cytokines (IL6 and IL2), cell surface receptors (ICOS, TNFRSF4 and TNFR2) and transcription factor (REL). Inhibits cooperatively with ZC3H12A the differentiation of helper T cells Th17 in lungs. They repress target mRNA encoding the Th17 cell-promoting factors IL6, ICOS, REL, IRF4, NFKBID and NFKBIZ. The cooperation requires RNA-binding by RC3H1 and the nuclease activity of ZC3H12A. Together with RC3H1, destabilizes TNFRSF4/OX40 mRNA by binding to the conserved stem loop structure in its 3'UTR. Self regulates by destabilizing its own mRNA. Cleaves mRNA harboring a stem-loop (SL), often located in their 3'-UTRs, during the early phase of inflammation in a helicase UPF1-dependent manner. Plays a role in the inhibition of microRNAs (miRNAs) biogenesis. Cleaves the terminal loop of a set of precursor miRNAs (pre-miRNAs) important for the regulation of the inflammatory response leading to their degradation, and thus preventing the biosynthesis of mature miRNAs. Also plays a role in promoting angiogenesis in response to inflammatory cytokines by inhibiting the production of antiangiogenic microRNAs via its anti-dicer RNase activity. Affects the overall ubiquitination of cellular proteins. Positively regulates deubiquitinase activity promoting the cleavage at 'Lys-48'- and 'Lys-63'-linked polyubiquitin chains on TNF receptor-associated factors (TRAFs), preventing JNK and NF-kappa-B signaling pathway activation, and hence negatively regulating macrophage-mediated inflammatory response and immune homeostasis. Also induces deubiquitination of the transcription factor HIF1A, probably leading to its stabilization and nuclear import, thereby positively regulating the expression of proangiogenic HIF1A-targeted genes. Involved in a TANK-dependent negative feedback response to attenuate NF-kappaB activation through the deubiquitination of IKBKG or TRAF6 in response to interleukin-1-beta (IL1B) stimulation or upon DNA damage. Prevents stress granule (SGs) formation and promotes macrophage apoptosis under stress conditions, including arsenite-induced oxidative stress, heat shock and energy deprivation. Plays a role in the regulation of macrophage polarization; promotes IL4-induced polarization of macrophages M1 into anti-inflammatory M2 state. May also act as a transcription factor that regulates the expression of multiple genes involved in inflammatory response, angiogenesis, adipogenesis and apoptosis. Functions as a positive regulator of glial differentiation of neuroprogenitor cells through an amyloid precursor protein (APP)-dependent signaling pathway. Attenuates septic myocardial contractile dysfunction in response to lipopolysaccharide (LPS) by reducing I-kappa-B-kinase (IKK)-mediated NF-kappa-B activation, and hence myocardial pro-inflammatory cytokine production. In terms of biological role, (Microbial infection) Binds to Japanese encephalitis virus (JEV) and Dengue virus (DEN) RNAs. Functionally, (Microbial infection) Exhibits antiviral activity against HIV-1 in lymphocytes by decreasing the abundance of HIV-1 viral RNA species. The sequence is that of Endoribonuclease ZC3H12A from Homo sapiens (Human).